The primary structure comprises 303 residues: Protease HtpX homolog (303 aa).

A run of 2 helical transmembrane segments spans residues 4 to 24 and 38 to 58; these read VVLF…TARI and MGML…ISLL. His144 is a Zn(2+) binding site. Residue Glu145 is part of the active site. His148 contacts Zn(2+). A run of 2 helical transmembrane segments spans residues 152–172 and 199–219; these read GDMV…IFLS and ISSI…VMYF. Glu224 serves as a coordination point for Zn(2+).

Belongs to the peptidase M48B family. The cofactor is Zn(2+).

The protein localises to the cell inner membrane. The polypeptide is Protease HtpX homolog (Chlorobium phaeobacteroides (strain BS1)).